The chain runs to 691 residues: MAHTFLLEIGLEEMPAHVVTPAIKQLVKRTADYLKEERVDYDEIKPFSTPRRLAVLITGLADKQRDISESVKGPAKKIAQDAEGNWSKAAIGFTRGQGLTTDDITFKEIKGTEYVYVDKFIAGEPVATVLAGLKDVITAMTFPTMMKWSTHHFQYIRPIRWLVALLDADVIPFSILDVTTDRNTRGHRFLGKDISIATAADYEGDLTSEFVIADADKRKSMIKTQIDKLAADHGWTVNVDAGLLEEVNNLVEWPTAFAGSFDEKYLTIPEEVLITSMRDHQRFFYARDAQGQLLPTFISVRNGNDHDLQNVVSGNEKVLTARLEDAMFFYTEDQKKTIADYVERLKTVSFHDKISTMAEKMSRVKAIAGVLAKHVGLNDAQTKAVLRASEIYKFDLVTGMVGEFAELQGVMGEKYALLQGEDPAVAQAIREHYEPISADGALPASVPGAVLALADKFDSILTFFAAGMIPSGSNDPYALRRQATGIVRIAQDQQWSLPVADLAQAFVAAETTANVAPKLDQAGQIDALVNFIKDRIRKILRSAKQRHDIIDAVTAGSSSDVLQIFTAADILASHADDANFKDVIESLTRVIRLAQKAPAEVAATTVDPALFENDSEGQLHQGVATVATAAKDGLTALYTALADIQPVIAAYFDATMVMAKDDAVRNNRLAELSRLADLALALGDLDQLVVK.

It belongs to the class-II aminoacyl-tRNA synthetase family. In terms of assembly, tetramer of two alpha and two beta subunits.

It is found in the cytoplasm. The catalysed reaction is tRNA(Gly) + glycine + ATP = glycyl-tRNA(Gly) + AMP + diphosphate. This chain is Glycine--tRNA ligase beta subunit, found in Levilactobacillus brevis (strain ATCC 367 / BCRC 12310 / CIP 105137 / JCM 1170 / LMG 11437 / NCIMB 947 / NCTC 947) (Lactobacillus brevis).